Reading from the N-terminus, the 157-residue chain is NAD(P)H-quinone oxidoreductase subunit N (157 aa).

This sequence belongs to the complex I NdhN subunit family. As to quaternary structure, NDH-1 can be composed of about 15 different subunits; different subcomplexes with different compositions have been identified which probably have different functions.

It localises to the cellular thylakoid membrane. It catalyses the reaction a plastoquinone + NADH + (n+1) H(+)(in) = a plastoquinol + NAD(+) + n H(+)(out). It carries out the reaction a plastoquinone + NADPH + (n+1) H(+)(in) = a plastoquinol + NADP(+) + n H(+)(out). Its function is as follows. NDH-1 shuttles electrons from an unknown electron donor, via FMN and iron-sulfur (Fe-S) centers, to quinones in the respiratory and/or the photosynthetic chain. The immediate electron acceptor for the enzyme in this species is believed to be plastoquinone. Couples the redox reaction to proton translocation, and thus conserves the redox energy in a proton gradient. Cyanobacterial NDH-1 also plays a role in inorganic carbon-concentration. In Picosynechococcus sp. (strain ATCC 27264 / PCC 7002 / PR-6) (Agmenellum quadruplicatum), this protein is NAD(P)H-quinone oxidoreductase subunit N.